A 105-amino-acid polypeptide reads, in one-letter code: MDKFYNYNSSSNQALLNLKVKPDSKQNLISDFVIINNLPYLKLFIKTAPEQGKANEEIINYLAKAWKLSRSNIEIIKGHTHSLKTILIKNIDEDYLNSIINSYIK.

It belongs to the UPF0235 family.

The protein is UPF0235 protein A1E_05380 of Rickettsia canadensis (strain McKiel).